Here is a 115-residue protein sequence, read N- to C-terminus: Histidine decarboxylase proenzyme (115 aa).

S83 carries the pyruvic acid (Ser) modification.

The proenzyme is a hexamer of identical pi chains; each pi chain monomer is cleaved to form a small (or beta) chain and a large (or alpha) chain by non-hydrolytic self-catalysis. It depends on pyruvate as a cofactor.

It catalyses the reaction L-histidine + H(+) = histamine + CO2. The polypeptide is Histidine decarboxylase proenzyme (Lentilactobacillus buchneri (Lactobacillus buchneri)).